The primary structure comprises 538 residues: Ribulokinase 1 (538 aa).

The protein belongs to the ribulokinase family.

It catalyses the reaction D-ribulose + ATP = D-ribulose 5-phosphate + ADP + H(+). The catalysed reaction is L-ribulose + ATP = L-ribulose 5-phosphate + ADP + H(+). It participates in carbohydrate degradation; L-arabinose degradation via L-ribulose; D-xylulose 5-phosphate from L-arabinose (bacterial route): step 2/3. The chain is Ribulokinase 1 from Staphylococcus saprophyticus subsp. saprophyticus (strain ATCC 15305 / DSM 20229 / NCIMB 8711 / NCTC 7292 / S-41).